Here is a 404-residue protein sequence, read N- to C-terminus: Probable tRNA sulfurtransferase (404 aa).

A THUMP domain is found at 60-165; that stretch reads TAVAESLKQV…EEAAYLSYET (106 aa). Residues 183–184, 208–209, R265, G287, and Q296 each bind ATP; these read ML and HF.

The protein belongs to the ThiI family.

It localises to the cytoplasm. It catalyses the reaction [ThiI sulfur-carrier protein]-S-sulfanyl-L-cysteine + a uridine in tRNA + 2 reduced [2Fe-2S]-[ferredoxin] + ATP + H(+) = [ThiI sulfur-carrier protein]-L-cysteine + a 4-thiouridine in tRNA + 2 oxidized [2Fe-2S]-[ferredoxin] + AMP + diphosphate. It carries out the reaction [ThiS sulfur-carrier protein]-C-terminal Gly-Gly-AMP + S-sulfanyl-L-cysteinyl-[cysteine desulfurase] + AH2 = [ThiS sulfur-carrier protein]-C-terminal-Gly-aminoethanethioate + L-cysteinyl-[cysteine desulfurase] + A + AMP + 2 H(+). Its pathway is cofactor biosynthesis; thiamine diphosphate biosynthesis. Its function is as follows. Catalyzes the ATP-dependent transfer of a sulfur to tRNA to produce 4-thiouridine in position 8 of tRNAs, which functions as a near-UV photosensor. Also catalyzes the transfer of sulfur to the sulfur carrier protein ThiS, forming ThiS-thiocarboxylate. This is a step in the synthesis of thiazole, in the thiamine biosynthesis pathway. The sulfur is donated as persulfide by IscS. In Streptococcus pneumoniae serotype 19F (strain G54), this protein is Probable tRNA sulfurtransferase.